A 665-amino-acid chain; its full sequence is UvrABC system protein B (665 aa).

One can recognise a Helicase ATP-binding domain in the interval 31-414; the sequence is DGVKGGEKAQ…EMEQTETVVQ (384 aa). 44–51 contacts ATP; sequence GATGTGKT. Positions 97–120 match the Beta-hairpin motif; the sequence is YYDYYQPEAYVPSSDTYIEKDSSI. Residues 435–601 form the Helicase C-terminal domain; that stretch reads QIDDLVGEIH…TIIKEIRDLI (167 aa). Positions 629 to 664 constitute a UVR domain; sequence ADLLMKLEREMKDAAKALDFETAATLRDTILELKAA.

It belongs to the UvrB family. Forms a heterotetramer with UvrA during the search for lesions. Interacts with UvrC in an incision complex.

The protein localises to the cytoplasm. Its function is as follows. The UvrABC repair system catalyzes the recognition and processing of DNA lesions. A damage recognition complex composed of 2 UvrA and 2 UvrB subunits scans DNA for abnormalities. Upon binding of the UvrA(2)B(2) complex to a putative damaged site, the DNA wraps around one UvrB monomer. DNA wrap is dependent on ATP binding by UvrB and probably causes local melting of the DNA helix, facilitating insertion of UvrB beta-hairpin between the DNA strands. Then UvrB probes one DNA strand for the presence of a lesion. If a lesion is found the UvrA subunits dissociate and the UvrB-DNA preincision complex is formed. This complex is subsequently bound by UvrC and the second UvrB is released. If no lesion is found, the DNA wraps around the other UvrB subunit that will check the other stand for damage. The chain is UvrABC system protein B from Enterococcus faecalis (strain ATCC 700802 / V583).